We begin with the raw amino-acid sequence, 295 residues long: Cop9 signalosome-interactor 1 (295 aa).

In terms of assembly, component of a COP9 signalosome-like (CSN) complex, composed of RRI1/CSN5, CSN9, RRI2/CSN10, PCI8/CSN11, CSN12 and CSI1. In the complex, it probably interacts directly with CSN9 and CSN12. Interacts also with RPN5.

The protein localises to the cytoplasm. It localises to the nucleus. In terms of biological role, component of the COP9 signalosome (CSN) complex that acts as an regulator of the ubiquitin (Ubl) conjugation pathway by mediating the deneddylation of the cullin subunit of SCF-type E3 ubiquitin-protein ligase complexes The CSN complex is involved in the regulation of the mating pheromone response. This chain is Cop9 signalosome-interactor 1 (CSI1), found in Saccharomyces cerevisiae (strain ATCC 204508 / S288c) (Baker's yeast).